The chain runs to 377 residues: Nitric oxide reductase FlRd-NAD(+) reductase (377 aa).

Belongs to the FAD-dependent oxidoreductase family. The cofactor is FAD.

The protein localises to the cytoplasm. It carries out the reaction 2 reduced [nitric oxide reductase rubredoxin domain] + NAD(+) + H(+) = 2 oxidized [nitric oxide reductase rubredoxin domain] + NADH. The protein operates within nitrogen metabolism; nitric oxide reduction. Its function is as follows. One of at least two accessory proteins for anaerobic nitric oxide (NO) reductase. Reduces the rubredoxin moiety of NO reductase. The chain is Nitric oxide reductase FlRd-NAD(+) reductase from Escherichia coli O6:K15:H31 (strain 536 / UPEC).